The chain runs to 160 residues: Cyclic pyranopterin monophosphate synthase (160 aa).

Substrate-binding positions include 74–76 (LSH) and 112–113 (ME). Aspartate 127 is an active-site residue.

This sequence belongs to the MoaC family. In terms of assembly, homohexamer; trimer of dimers.

The catalysed reaction is (8S)-3',8-cyclo-7,8-dihydroguanosine 5'-triphosphate = cyclic pyranopterin phosphate + diphosphate. Its pathway is cofactor biosynthesis; molybdopterin biosynthesis. In terms of biological role, catalyzes the conversion of (8S)-3',8-cyclo-7,8-dihydroguanosine 5'-triphosphate to cyclic pyranopterin monophosphate (cPMP). This Geobacter sulfurreducens (strain ATCC 51573 / DSM 12127 / PCA) protein is Cyclic pyranopterin monophosphate synthase.